Here is a 503-residue protein sequence, read N- to C-terminus: uncharacterized protein (503 aa).

The protein belongs to the Mg-chelatase subunits D/I family. ComM subfamily.

This is an uncharacterized protein from Mycobacterium bovis (strain ATCC BAA-935 / AF2122/97).